A 285-amino-acid polypeptide reads, in one-letter code: Protease HtpX homolog (285 aa).

2 helical membrane-spanning segments follow: residues 7–27 and 30–50; these read TAML…MIGG and GMTI…WFSD. Position 131 (His-131) interacts with Zn(2+). The active site involves Glu-132. His-135 is a Zn(2+) binding site. 2 consecutive transmembrane segments (helical) span residues 146 to 166 and 177 to 197; these read ITAT…FFGG and IAGI…QMAI. Glu-202 provides a ligand contact to Zn(2+).

The protein belongs to the peptidase M48B family. Requires Zn(2+) as cofactor.

The protein localises to the cell inner membrane. The sequence is that of Protease HtpX homolog from Burkholderia cenocepacia (strain ATCC BAA-245 / DSM 16553 / LMG 16656 / NCTC 13227 / J2315 / CF5610) (Burkholderia cepacia (strain J2315)).